We begin with the raw amino-acid sequence, 397 residues long: MCAKKYKIAALIVAAGVGSRCNSTIPKQYIKLAGKSVLFHTIKRFLANQYIDYIRIAINRDHESFYEKAISLITDTKLLSPVYGGENRQSSVKLGLESLQKINPDFVVIHDACRPFVSDVLIDNLVESMINDQYTGVVPAIEVEDTMSLVSNSFIESTISRGKLRAIQTPQIFNFKELLSCHQSVKEFTDDSSLMVEHKKHVAIIKGEKSNFKLTTKEDINMAKLLFEEPKFRVGAGYDIHKFIKVQNGAESFIKICGVKIEHNMAIEAHSDGDVAIHAIVDAILGALGCGDIGEHFPPSSSEWKDCNSSHFLDFAAKKAKEKGYSVSNLDITIVCEEPKISPYKVEMKKFISKALEIDDEFVNIKATTAEKLGYIGRNEGIAVHASVLLHTNFYWK.

A 2-C-methyl-D-erythritol 4-phosphate cytidylyltransferase region spans residues 1 to 233 (MCAKKYKIAA…KLLFEEPKFR (233 aa)). The segment at 233 to 397 (RVGAGYDIHK…VLLHTNFYWK (165 aa)) is 2-C-methyl-D-erythritol 2,4-cyclodiphosphate synthase. A divalent metal cation contacts are provided by Asp-239 and His-241. Residues 239 to 241 (DIH) and 270 to 271 (HS) contribute to the 4-CDP-2-C-methyl-D-erythritol 2-phosphate site. Residue His-278 coordinates a divalent metal cation. Residues 292 to 294 (DIG), 368 to 371 (TTAE), Tyr-375, and Arg-378 each bind 4-CDP-2-C-methyl-D-erythritol 2-phosphate.

In the N-terminal section; belongs to the IspD/TarI cytidylyltransferase family. IspD subfamily. This sequence in the C-terminal section; belongs to the IspF family. The cofactor is a divalent metal cation.

It catalyses the reaction 2-C-methyl-D-erythritol 4-phosphate + CTP + H(+) = 4-CDP-2-C-methyl-D-erythritol + diphosphate. The catalysed reaction is 4-CDP-2-C-methyl-D-erythritol 2-phosphate = 2-C-methyl-D-erythritol 2,4-cyclic diphosphate + CMP. It participates in isoprenoid biosynthesis; isopentenyl diphosphate biosynthesis via DXP pathway; isopentenyl diphosphate from 1-deoxy-D-xylulose 5-phosphate: step 2/6. It functions in the pathway isoprenoid biosynthesis; isopentenyl diphosphate biosynthesis via DXP pathway; isopentenyl diphosphate from 1-deoxy-D-xylulose 5-phosphate: step 4/6. Functionally, bifunctional enzyme that catalyzes the formation of 4-diphosphocytidyl-2-C-methyl-D-erythritol from CTP and 2-C-methyl-D-erythritol 4-phosphate (MEP) (IspD), and catalyzes the conversion of 4-diphosphocytidyl-2-C-methyl-D-erythritol 2-phosphate (CDP-ME2P) to 2-C-methyl-D-erythritol 2,4-cyclodiphosphate (ME-CPP) with a corresponding release of cytidine 5-monophosphate (CMP) (IspF). The chain is Bifunctional enzyme IspD/IspF from Wolbachia pipientis wMel.